The primary structure comprises 286 residues: MELTINTEKETADILDAFIKVAPYLNSLVQDDITIGIYDTEKLLVNIPAKTFSLNVKAGDPLQEGDIITDAIRSNQKKTSMVPKELFGFPLIARAIPLHDENGRVIGGVGLGTSLEESSKLHDVAESLSAVVEQTAAAISDISESINGFSTQMSGISSQAKKVSESAGEIADISVTVKGISDQSNLLGLNAAIEAARAGESGKGFSVVADEIRKLATHSKENVGQIDQITKKIHSLLKGLEESIESINQHTDGQAAAVEQISATMQEISGSAQHLAKMAEKALEEE.

The 219-residue stretch at isoleucine 68–glutamate 286 folds into the Methyl-accepting transducer domain.

Belongs to the methyl-accepting chemotaxis (MCP) protein family.

Functionally, chemotactic-signal transducers respond to changes in the concentration of attractants and repellents in the environment, transduce a signal from the outside to the inside of the cell, and facilitate sensory adaptation through the variation of the level of methylation. Attractants increase the level of methylation while repellents decrease the level of methylation. This chain is Putative sensory transducer protein YfmS (yfmS), found in Bacillus subtilis (strain 168).